The chain runs to 485 residues: UDP-N-acetylmuramate--L-alanine ligase (485 aa).

Residue 112–118 coordinates ATP; that stretch reads GTHGKTT.

Belongs to the MurCDEF family.

The protein localises to the cytoplasm. It carries out the reaction UDP-N-acetyl-alpha-D-muramate + L-alanine + ATP = UDP-N-acetyl-alpha-D-muramoyl-L-alanine + ADP + phosphate + H(+). Its pathway is cell wall biogenesis; peptidoglycan biosynthesis. In terms of biological role, cell wall formation. In Variovorax paradoxus (strain S110), this protein is UDP-N-acetylmuramate--L-alanine ligase.